The chain runs to 567 residues: Asparagine--tRNA ligase, chloroplastic/mitochondrial (567 aa).

Residues 113-191 (NIMGWVRTLR…VELKVEKIIV (79 aa)) constitute a DNA-binding region (OB).

This sequence belongs to the class-II aminoacyl-tRNA synthetase family.

The protein resides in the plastid. It localises to the chloroplast. The protein localises to the mitochondrion. It catalyses the reaction tRNA(Asn) + L-asparagine + ATP = L-asparaginyl-tRNA(Asn) + AMP + diphosphate + H(+). This is Asparagine--tRNA ligase, chloroplastic/mitochondrial from Arabidopsis thaliana (Mouse-ear cress).